A 991-amino-acid chain; its full sequence is Phosphate metabolism protein 7 (991 aa).

Residues 1–9 are Extracellular-facing; that stretch reads MADSSSTSA. The chain crosses the membrane as a helical span at residues 10 to 30; it reads FISTLIIYGLTAVVFVWLFLL. At 31-91 the chain is on the cytoplasmic side; that stretch reads LRPKNRRVYE…TSVDGYFLLR (61 aa). The helical transmembrane segment at 92–112 threads the bilayer; sequence YIGIVGSLSFVGCLLLLPILL. The Extracellular segment spans residues 113 to 138; the sequence is PVNATNGNNLQGFELLSFSNVTNKNR. Residues Asn115 and Asn132 are each glycosylated (N-linked (GlcNAc...) asparagine). Residues 139–159 traverse the membrane as a helical segment; the sequence is FYAHVFLSWIFFGLFTYVIYK. Over 160–388 the chain is Cytoplasmic; sequence ELYYYVVFRH…ERHSRRAVAN (229 aa). The chain crosses the membrane as a helical span at residues 389-409; sequence TIMVLLIIFWAFPVAVVGIIS. Over 410–437 the chain is Extracellular; that stretch reads NVNFLTDKVPFLRFINNMPTFLMGVITG. Residues 438–458 traverse the membrane as a helical segment; sequence LLPTIALVVLMSLVPPFIVML. The Cytoplasmic portion of the chain corresponds to 459–471; the sequence is GKLSGCVTRQETD. The chain crosses the membrane as a helical span at residues 472–492; sequence LYSQAWYYAFAVIQIFLVVTA. The Extracellular portion of the chain corresponds to 493-523; sequence TSSASSTVDSIIDRPRSAMTLLANNLPKASN. Residues 524-544 traverse the membrane as a helical segment; the sequence is FYIMYFILKGLTGPTWTILQA. The Cytoplasmic portion of the chain corresponds to 545–582; the sequence is VNLLLSKVLGRVLDSTPRQKWNRYNTLATPRMGIVYPG. Residues 583–603 form a helical membrane-spanning segment; it reads IEILVCIYICYSIIAPILLFF. Ser604 is a topological domain (extracellular). A helical transmembrane segment spans residues 605–625; that stretch reads TVMLTLLYVAYLYNLNYVFGF. At 626-637 the chain is on the cytoplasmic side; that stretch reads SFDLKGRNYPRA. Residues 638–658 traverse the membrane as a helical segment; it reads LFQIFVGIYLSEVCLLGLFIM. Over 659-661 the chain is Extracellular; it reads AKT. A helical transmembrane segment spans residues 662 to 682; it reads WGPLVLEVFWIVVTALAHIYM. Residues 683–991 lie on the Cytoplasmic side of the membrane; it reads KRKFIPLFDA…PPDYEPEAKK (309 aa). A disordered region spans residues 749 to 787; it reads KANLIPDNDGSSENGTPSNPFESGSERASLSGSNAESDS. Residues 757–785 show a composition bias toward polar residues; it reads DGSSENGTPSNPFESGSERASLSGSNAES.

This sequence belongs to the CSC1 (TC 1.A.17) family.

It localises to the cell membrane. Functionally, acts as an osmosensitive calcium-permeable cation channel. The sequence is that of Phosphate metabolism protein 7 (PHM7) from Saccharomyces cerevisiae (strain ATCC 204508 / S288c) (Baker's yeast).